We begin with the raw amino-acid sequence, 339 residues long: AB hydrolase superfamily protein B1A11.02 (339 aa).

Belongs to the AB hydrolase superfamily.

The chain is AB hydrolase superfamily protein B1A11.02 from Schizosaccharomyces pombe (strain 972 / ATCC 24843) (Fission yeast).